The following is a 655-amino-acid chain: MQIPETSSVHQNEWQRDVFVLSSGTCLPQQKAEVYRAHLAQIQYAWANSEISEASAVHLFKKYAEKYSAILDSDKLEIGLNNYADSILTMAKCQRNESDKWQSSLTTNNVLKLKSVQEMAEAGRRAQLSLLNSTDASVRVGNEIGTSGYSTVLAHNVLRNPSHAVPHAASSDCQIPEGSSNFLQNSKVSAFTKANTSSNTLINNSIPINTSLMQRNEVKAPTTFSTQSGPNVFSSTTSVYSGKRKACYALGDESTDIQPKPLVQRQLASKEATGDSDFKTAKEQLWVDQQKKHSNQPQRNPGPLYGGGKKSLGAARSRGLHGKFIPPLPRQEDVEDSNRKVYGQGNSEMNSTSDEHLKNIEPKMIELIMSEIMDHGPPLNWDDIAGLEFAKTTIKEIVVWPMLRPDIFTGLRGPPKGILLFGPPGTGKTLIGKCIACQSGATFFSISASSLTSKWVGEGEKMVRALFTVARCHQPAVIFIDEIDSLLSQRGEGEHESSRRIKTEFLVQLDGATTSSEDRILVVGATNRPQEIDEAARRRLVKRLYIPLPEASARKQIVVSLMSKEHCSLTEQEVEAIVLQADGFSGADMTQLCREAALGPIRSIQLMDISTITAEQVRPIAYIDFQSAFLVVRPSVSQKDLELYENWNKTFGCGR.

The tract at residues 289-313 (QQKKHSNQPQRNPGPLYGGGKKSLG) is disordered. Residues A385 and 425 to 430 (GTGKTL) contribute to the ATP site.

This sequence belongs to the AAA ATPase family. Hexamer. Requires Mg(2+) as cofactor.

The protein resides in the nucleus. Its subcellular location is the cytoplasm. It is found in the perinuclear region. It catalyses the reaction ATP + H2O = ADP + phosphate + H(+). May be involved in DNA double-strand break (DBS) repair via homologous recombination (HR). May regulate osteoblast proliferation and differentiation. The protein is Fidgetin-like protein 1 (fignl1) of Xenopus laevis (African clawed frog).